A 384-amino-acid chain; its full sequence is Spermidine/putrescine import ATP-binding protein PotA (384 aa).

An ABC transporter domain is found at 6-238 (ITFNNVSKTF…PINHFVANFI (233 aa)). 40-47 (GASGSGKS) lines the ATP pocket.

It belongs to the ABC transporter superfamily. Spermidine/putrescine importer (TC 3.A.1.11.1) family. As to quaternary structure, the complex is composed of two ATP-binding proteins (PotA), two transmembrane proteins (PotB and PotC) and a solute-binding protein (PotD).

Its subcellular location is the cell membrane. It carries out the reaction ATP + H2O + polyamine-[polyamine-binding protein]Side 1 = ADP + phosphate + polyamineSide 2 + [polyamine-binding protein]Side 1.. In terms of biological role, part of the ABC transporter complex PotABCD involved in spermidine/putrescine import. Responsible for energy coupling to the transport system. This Streptococcus pyogenes serotype M12 (strain MGAS2096) protein is Spermidine/putrescine import ATP-binding protein PotA.